A 141-amino-acid polypeptide reads, in one-letter code: Large ribosomal subunit protein uL14 (141 aa).

Belongs to the universal ribosomal protein uL14 family. As to quaternary structure, part of the 50S ribosomal subunit. Forms a cluster with proteins L3 and L24e, part of which may contact the 16S rRNA in 2 intersubunit bridges.

Binds to 23S rRNA. Forms part of two intersubunit bridges in the 70S ribosome. This Pyrococcus abyssi (strain GE5 / Orsay) protein is Large ribosomal subunit protein uL14.